Here is a 33-residue protein sequence, read N- to C-terminus: uncharacterized protein (33 aa).

A helical transmembrane segment spans residues 11–31 (LALVIYMSVVLLLMVGVPLLF).

The protein localises to the membrane. This is an uncharacterized protein from Saccharomyces cerevisiae (strain ATCC 204508 / S288c) (Baker's yeast).